Reading from the N-terminus, the 417-residue chain is Tyrosine--tRNA ligase (417 aa).

Tyr-35 is an L-tyrosine binding site. Residues 40–49 (ATAGSLTVGH) carry the 'HIGH' region motif. L-tyrosine contacts are provided by Tyr-165 and Gln-169. Residues 229-233 (KFGKS) carry the 'KMSKS' region motif. Residue Lys-232 coordinates ATP. One can recognise an S4 RNA-binding domain in the interval 350 to 416 (ISLLEALVFT…GKRFNALIIF (67 aa)).

The protein belongs to the class-I aminoacyl-tRNA synthetase family. TyrS type 1 subfamily. Homodimer.

Its subcellular location is the cytoplasm. It carries out the reaction tRNA(Tyr) + L-tyrosine + ATP = L-tyrosyl-tRNA(Tyr) + AMP + diphosphate + H(+). Its function is as follows. Catalyzes the attachment of tyrosine to tRNA(Tyr) in a two-step reaction: tyrosine is first activated by ATP to form Tyr-AMP and then transferred to the acceptor end of tRNA(Tyr). In Phytoplasma mali (strain AT), this protein is Tyrosine--tRNA ligase.